A 288-amino-acid chain; its full sequence is UTP--glucose-1-phosphate uridylyltransferase (288 aa).

It belongs to the UDPGP type 2 family.

It catalyses the reaction alpha-D-glucose 1-phosphate + UTP + H(+) = UDP-alpha-D-glucose + diphosphate. It functions in the pathway glycolipid metabolism; diglucosyl-diacylglycerol biosynthesis. Its function is as follows. Catalyzes the formation of UDP-glucose from glucose-1-phosphate and UTP. This is an intermediate step in the biosynthesis of diglucosyl-diacylglycerol (Glc2-DAG), i.e. a glycolipid found in the membrane, which is also used as a membrane anchor for lipoteichoic acid (LTA). The chain is UTP--glucose-1-phosphate uridylyltransferase (gtaB) from Staphylococcus haemolyticus (strain JCSC1435).